Reading from the N-terminus, the 156-residue chain is Ribonuclease pancreatic (156 aa).

Positions 1-28 are cleaved as a signal peptide; the sequence is MALEKSLALLPLLVLVLLVLGWVQPSLG. Substrate is bound by residues K35 and R38. Residue H40 is the Proton acceptor of the active site. Intrachain disulfides connect C54–C112, C68–C123, C86–C138, and C93–C100. N62 carries an N-linked (GlcNAc...) asparagine glycan. 69-73 contacts substrate; that stretch reads KPVNT. The N-linked (GlcNAc...) asparagine glycan is linked to N90. Residues K94 and R113 each contribute to the substrate site. H147 (proton donor) is an active-site residue.

This sequence belongs to the pancreatic ribonuclease family. Monomer. Interacts with and forms tight 1:1 complexes with RNH1. Dimerization of two such complexes may occur. Interaction with RNH1 inhibits this protein.

The protein resides in the secreted. It carries out the reaction an [RNA] containing cytidine + H2O = an [RNA]-3'-cytidine-3'-phosphate + a 5'-hydroxy-ribonucleotide-3'-[RNA].. The enzyme catalyses an [RNA] containing uridine + H2O = an [RNA]-3'-uridine-3'-phosphate + a 5'-hydroxy-ribonucleotide-3'-[RNA].. Functionally, endonuclease that catalyzes the cleavage of RNA on the 3' side of pyrimidine nucleotides. Acts on single-stranded and double-stranded RNA. This is Ribonuclease pancreatic (RNASE1) from Lagothrix lagotricha (Brown woolly monkey).